Here is a 154-residue protein sequence, read N- to C-terminus: ATP synthase subunit b', chloroplastic (154 aa).

Residues 22-42 (GTLPLIAIQFLILMFLLNILL) traverse the membrane as a helical segment.

Belongs to the ATPase B chain family. As to quaternary structure, F-type ATPases have 2 components, F(1) - the catalytic core - and F(0) - the membrane proton channel. F(1) has five subunits: alpha(3), beta(3), gamma(1), delta(1), epsilon(1). F(0) has four main subunits: a(1), b(1), b'(1) and c(10-14). The alpha and beta chains form an alternating ring which encloses part of the gamma chain. F(1) is attached to F(0) by a central stalk formed by the gamma and epsilon chains, while a peripheral stalk is formed by the delta, b and b' chains.

The protein resides in the plastid. It localises to the chloroplast thylakoid membrane. F(1)F(0) ATP synthase produces ATP from ADP in the presence of a proton or sodium gradient. F-type ATPases consist of two structural domains, F(1) containing the extramembraneous catalytic core and F(0) containing the membrane proton channel, linked together by a central stalk and a peripheral stalk. During catalysis, ATP synthesis in the catalytic domain of F(1) is coupled via a rotary mechanism of the central stalk subunits to proton translocation. Functionally, component of the F(0) channel, it forms part of the peripheral stalk, linking F(1) to F(0). The b'-subunit is a diverged and duplicated form of b found in plants and photosynthetic bacteria. This chain is ATP synthase subunit b', chloroplastic, found in Vaucheria litorea (Yellow-green alga).